We begin with the raw amino-acid sequence, 640 residues long: 1,4-alpha-glucan branching enzyme GlgB (640 aa).

The active-site Nucleophile is the D318. Residue E371 is the Proton donor of the active site.

The protein belongs to the glycosyl hydrolase 13 family. GlgB subfamily. As to quaternary structure, monomer.

It carries out the reaction Transfers a segment of a (1-&gt;4)-alpha-D-glucan chain to a primary hydroxy group in a similar glucan chain.. Its pathway is glycan biosynthesis; glycogen biosynthesis. Catalyzes the formation of the alpha-1,6-glucosidic linkages in glycogen by scission of a 1,4-alpha-linked oligosaccharide from growing alpha-1,4-glucan chains and the subsequent attachment of the oligosaccharide to the alpha-1,6 position. In Francisella tularensis subsp. novicida (strain U112), this protein is 1,4-alpha-glucan branching enzyme GlgB.